A 462-amino-acid chain; its full sequence is Glycerol-3-phosphate acyltransferase ATS12, chloroplastic (462 aa).

Residues 1–82 (MFILSSSSST…DKESAQSAAT (82 aa)) constitute a chloroplast transit peptide. The short motif at 233–238 (HQTEAD) is the HXXXXD motif element.

Belongs to the GPAT/DAPAT family.

The protein localises to the plastid. It localises to the chloroplast stroma. It catalyses the reaction a fatty acyl-[ACP] + sn-glycerol 3-phosphate = a 1-acyl-sn-glycero-3-phosphate + holo-[ACP]. The catalysed reaction is sn-glycerol 3-phosphate + an acyl-CoA = a 1-acyl-sn-glycero-3-phosphate + CoA. It functions in the pathway phospholipid metabolism; CDP-diacylglycerol biosynthesis; CDP-diacylglycerol from sn-glycerol 3-phosphate: step 1/3. In terms of biological role, esterifies the acyl-group from acyl-acyl carrier proteins (acyl-ACPs) to the sn-1 position of glycerol-3-phosphate. The physiological acyl donors in chloroplasts are acyl-ACPs, but acyl-CoAs are used as artificial donor for in vitro reactions. The enzyme from chilling-resistant plants discriminates against non-fluid palmitic acid and selects oleic acid whereas the enzyme from sensitive plants accepts both fatty acids. Squash is chilling-sensitive. Does not seem to discriminate between the acyl-ACP thioesters 18:1-ACP, 18:0-ACP and 16:0-ACP. Exhibits higher selectivity for 16:0-CoA than 18:1-CoA in vitro. The protein is Glycerol-3-phosphate acyltransferase ATS12, chloroplastic of Cucurbita moschata (Winter crookneck squash).